Here is a 230-residue protein sequence, read N- to C-terminus: GTP cyclohydrolase III (230 aa).

The protein belongs to the archaeal-type GTP cyclohydrolase family.

It catalyses the reaction GTP + 3 H2O = 2-amino-5-formylamino-6-(5-phospho-D-ribosylamino)pyrimidin-4(3H)-one + 2 phosphate + 2 H(+). Functionally, catalyzes the formation of 2-amino-5-formylamino-6-ribofuranosylamino-4(3H)-pyrimidinone ribonucleotide monophosphate and inorganic phosphate from GTP. Also has an independent pyrophosphate phosphohydrolase activity. This is GTP cyclohydrolase III from Saccharolobus islandicus (strain M.16.27) (Sulfolobus islandicus).